Here is a 550-residue protein sequence, read N- to C-terminus: CTP synthase (550 aa).

The interval 1–277 (MNGSADAGPR…GRAVERALGL (277 aa)) is amidoligase domain. S23 lines the CTP pocket. S23 serves as a coordination point for UTP. 24-29 (SLGKGI) contributes to the ATP binding site. Y64 serves as a coordination point for L-glutamine. D81 is a binding site for ATP. Positions 81 and 151 each coordinate Mg(2+). CTP-binding positions include 158–160 (DIE), 198–203 (KTKPTQ), and K234. UTP is bound by residues 198-203 (KTKPTQ) and K234. V252 provides a ligand contact to ATP. One can recognise a Glutamine amidotransferase type-1 domain in the interval 302–549 (KIAIAGKYVK…VEAALAYQER (248 aa)). Residue G364 coordinates L-glutamine. Residue C391 is the Nucleophile; for glutamine hydrolysis of the active site. L-glutamine is bound by residues 392–395 (LGLQ), E415, and R472. Active-site residues include H522 and E524.

Belongs to the CTP synthase family. In terms of assembly, homotetramer in the presence of UTP and ATP. Is in a protein concentration-dependent equilibrium between monomer, dimer, and tetramer in the absence of UTP and ATP.

It carries out the reaction UTP + L-glutamine + ATP + H2O = CTP + L-glutamate + ADP + phosphate + 2 H(+). The catalysed reaction is L-glutamine + H2O = L-glutamate + NH4(+). The enzyme catalyses UTP + NH4(+) + ATP = CTP + ADP + phosphate + 2 H(+). It functions in the pathway pyrimidine metabolism; CTP biosynthesis via de novo pathway; CTP from UDP: step 2/2. Its activity is regulated as follows. Allosterically activated by GTP, when glutamine is the substrate. GTP has no effect on the reaction when ammonia is the substrate. The allosteric effector GTP functions by stabilizing the protein conformation that binds the tetrahedral intermediate(s) formed during glutamine hydrolysis. Inhibited by the product CTP, via allosteric rather than competitive inhibition. Functionally, catalyzes the ATP-dependent amination of UTP to CTP with either L-glutamine or ammonia as the source of nitrogen. Regulates intracellular CTP levels through interactions with the four ribonucleotide triphosphates. This is CTP synthase from Thermus thermophilus (strain ATCC 27634 / DSM 579 / HB8).